A 187-amino-acid chain; its full sequence is dCTP deaminase, dUMP-forming (187 aa).

DCTP is bound by residues 101-106 (KSSLGR) and aspartate 119. The Proton donor/acceptor role is filled by glutamate 129. Positions 148, 162, and 174 each coordinate dCTP.

It belongs to the dCTP deaminase family. In terms of assembly, homotrimer.

It catalyses the reaction dCTP + 2 H2O = dUMP + NH4(+) + diphosphate. It participates in pyrimidine metabolism; dUMP biosynthesis; dUMP from dCTP: step 1/1. Bifunctional enzyme that catalyzes both the deamination of dCTP to dUTP and the hydrolysis of dUTP to dUMP without releasing the toxic dUTP intermediate. This is dCTP deaminase, dUMP-forming from Corynebacterium kroppenstedtii (strain DSM 44385 / JCM 11950 / CIP 105744 / CCUG 35717).